The chain runs to 334 residues: Hematopoietic SH2 domain-containing protein (334 aa).

Residues 34 to 125 (WFHGTISREA…PFGELLTQAC (92 aa)) enclose the SH2 domain. Disordered stretches follow at residues 157–181 (EVQRSSCPPEEASERKPSTTTKGEF) and 254–280 (EDSCAATTSLQNPAEPQALRGREATFR). A compositionally biased stretch (polar residues) spans 258–267 (AATTSLQNPA).

As to quaternary structure, interacts with FES and TNK2. Post-translationally, may be phosphorylated by FES and ACK1. As to expression, predominantly expressed in spleen and thymus. Appears not to be expressed in heart, brain, liver, kidney, embryo, lung and ovary.

The protein localises to the cytoplasm. The protein resides in the mitochondrion. Adapter protein involved in tyrosine kinase and CD28 signaling. May be a modulator of the apoptotic response through its ability to affect mitochondrial stability. The protein is Hematopoietic SH2 domain-containing protein (Hsh2d) of Mus musculus (Mouse).